Here is a 180-residue protein sequence, read N- to C-terminus: Erythropoietin (180 aa).

The first 20 residues, 1 to 20 (MTGLLAFLLIVLEWTRPSLP), serve as a signal peptide directing secretion. Intrachain disulfides connect cysteine 27–cysteine 175 and cysteine 49–cysteine 53. Asparagine 75 carries an N-linked (GlcNAc...) asparagine glycan.

This sequence belongs to the EPO/TPO family.

The protein localises to the secreted. Its function is as follows. Erythropoietin is the principal hormone involved in the regulation of erythrocyte differentiation and the maintenance of a physiological level of circulating erythrocyte mass. The protein is Erythropoietin (epo) of Tetraodon nigroviridis (Spotted green pufferfish).